A 184-amino-acid chain; its full sequence is Bifunctional protein PyrR (184 aa).

Residues 99–111 carry the PRPP-binding motif; sequence IVLVDDVLYTGRT.

This sequence belongs to the purine/pyrimidine phosphoribosyltransferase family. PyrR subfamily. Homodimer and homohexamer; in equilibrium.

It catalyses the reaction UMP + diphosphate = 5-phospho-alpha-D-ribose 1-diphosphate + uracil. Regulates transcriptional attenuation of the pyrimidine nucleotide (pyr) operon by binding in a uridine-dependent manner to specific sites on pyr mRNA. This disrupts an antiterminator hairpin in the RNA and favors formation of a downstream transcription terminator, leading to a reduced expression of downstream genes. Its function is as follows. Also displays a weak uracil phosphoribosyltransferase activity which is not physiologically significant. This chain is Bifunctional protein PyrR, found in Acetivibrio thermocellus (strain ATCC 27405 / DSM 1237 / JCM 9322 / NBRC 103400 / NCIMB 10682 / NRRL B-4536 / VPI 7372) (Clostridium thermocellum).